The sequence spans 79 residues: Acyl carrier protein (79 aa).

The Carrier domain maps to 2–77; it reads STIEERVKKI…QAIDYVKAHV (76 aa). The residue at position 37 (S37) is an O-(pantetheine 4'-phosphoryl)serine.

Belongs to the acyl carrier protein (ACP) family. Post-translationally, 4'-phosphopantetheine is transferred from CoA to a specific serine of apo-ACP by AcpS. This modification is essential for activity because fatty acids are bound in thioester linkage to the sulfhydryl of the prosthetic group.

It is found in the cytoplasm. Its pathway is lipid metabolism; fatty acid biosynthesis. Carrier of the growing fatty acid chain in fatty acid biosynthesis. The sequence is that of Acyl carrier protein from Xanthomonas axonopodis pv. citri (strain 306).